Here is a 253-residue protein sequence, read N- to C-terminus: Aspartic acid-rich protein (253 aa).

A signal peptide spans methionine 1–lysine 22. Residues aspartate 211–aspartate 253 form a disordered region.

It belongs to the nucleosome assembly protein (NAP) family.

The chain is Aspartic acid-rich protein from Plasmodium falciparum (isolate fcm17 / Senegal).